We begin with the raw amino-acid sequence, 141 residues long: Alpha-lactalbumin (141 aa).

A signal peptide spans 1-19 (MMSFVSLLVVGILFPAIQA). The region spanning 20–141 (KQFTKCELSQ…KLDQWLCEKM (122 aa)) is the C-type lysozyme domain. 4 cysteine pairs are disulfide-bonded: C25/C138, C47/C129, C80/C95, and C91/C109. Positions 97, 100, 102, 105, and 106 each coordinate Ca(2+).

Belongs to the glycosyl hydrolase 22 family. Lactose synthase (LS) is a heterodimer of a catalytic component, beta1,4-galactosyltransferase (beta4Gal-T1) and a regulatory component, alpha-lactalbumin (LA). Mammary gland specific. Secreted in milk.

It is found in the secreted. Its function is as follows. Regulatory subunit of lactose synthase, changes the substrate specificity of galactosyltransferase in the mammary gland making glucose a good acceptor substrate for this enzyme. This enables LS to synthesize lactose, the major carbohydrate component of milk. In other tissues, galactosyltransferase transfers galactose onto the N-acetylglucosamine of the oligosaccharide chains in glycoproteins. In Sus scrofa (Pig), this protein is Alpha-lactalbumin (LALBA).